A 205-amino-acid polypeptide reads, in one-letter code: Cytochrome c oxidase subunit 3 (205 aa).

5 helical membrane-spanning segments follow: residues 29-49, 73-93, 104-124, 144-164, and 184-204; these read TIVF…MYFV, LAIT…VFAA, WFLI…YEYF, ITTG…VVVL, and SYYW…IYFI.

Belongs to the cytochrome c oxidase subunit 3 family. Associates with subunits I, II and IV to form cytochrome c oxidase.

Its subcellular location is the cell membrane. The enzyme catalyses 4 Fe(II)-[cytochrome c] + O2 + 8 H(+)(in) = 4 Fe(III)-[cytochrome c] + 2 H2O + 4 H(+)(out). The chain is Cytochrome c oxidase subunit 3 (ctaE) from Corynebacterium efficiens (strain DSM 44549 / YS-314 / AJ 12310 / JCM 11189 / NBRC 100395).